The sequence spans 191 residues: Potassium-transporting ATPase KdpC subunit (191 aa).

Residues 7–27 form a helical membrane-spanning segment; that stretch reads ASLVLFLSLTLLTGVAYPLLV.

Belongs to the KdpC family. The system is composed of three essential subunits: KdpA, KdpB and KdpC.

It is found in the cell inner membrane. In terms of biological role, part of the high-affinity ATP-driven potassium transport (or Kdp) system, which catalyzes the hydrolysis of ATP coupled with the electrogenic transport of potassium into the cytoplasm. This subunit acts as a catalytic chaperone that increases the ATP-binding affinity of the ATP-hydrolyzing subunit KdpB by the formation of a transient KdpB/KdpC/ATP ternary complex. This chain is Potassium-transporting ATPase KdpC subunit, found in Methylibium petroleiphilum (strain ATCC BAA-1232 / LMG 22953 / PM1).